A 169-amino-acid chain; its full sequence is ATP synthase subunit b (169 aa).

Residues F26–P46 form a helical membrane-spanning segment.

The protein belongs to the ATPase B chain family. In terms of assembly, F-type ATPases have 2 components, F(1) - the catalytic core - and F(0) - the membrane proton channel. F(1) has five subunits: alpha(3), beta(3), gamma(1), delta(1), epsilon(1). F(0) has three main subunits: a(1), b(2) and c(10-14). The alpha and beta chains form an alternating ring which encloses part of the gamma chain. F(1) is attached to F(0) by a central stalk formed by the gamma and epsilon chains, while a peripheral stalk is formed by the delta and b chains.

The protein resides in the cell membrane. Functionally, f(1)F(0) ATP synthase produces ATP from ADP in the presence of a proton or sodium gradient. F-type ATPases consist of two structural domains, F(1) containing the extramembraneous catalytic core and F(0) containing the membrane proton channel, linked together by a central stalk and a peripheral stalk. During catalysis, ATP synthesis in the catalytic domain of F(1) is coupled via a rotary mechanism of the central stalk subunits to proton translocation. Component of the F(0) channel, it forms part of the peripheral stalk, linking F(1) to F(0). This is ATP synthase subunit b from Mycobacterium sp. (strain JLS).